The following is a 325-amino-acid chain: RNA ligase 1 (325 aa).

Requires Mg(2+) as cofactor. The cofactor is Mn(2+). Post-translationally, AMPylates itself (auto-AMPylation).

The enzyme catalyses ATP + (ribonucleotide)n-3'-hydroxyl + 5'-phospho-(ribonucleotide)m = (ribonucleotide)n+m + AMP + diphosphate.. Functionally, functions as an RNA ligase, in vitro. The ligation reaction entails three nucleotidyl transfer steps. In the first step, the RNA ligase reacts with ATP in the absence of nucleic acid to form a covalent ligase-AMP intermediate and release pyrophosphate. In step 2, the ligase-AMP binds to the nucleic acid and transfers the adenylate to the 5'-PO4 terminus to form an adenylylated intermediate. In step 3, the RNA ligase directs the attack of the 3'-OH on the 5'-phosphoanhydride linkage, resulting in a repaired 3'-5' phosphodiester and release of AMP. Exhibits selectivity for single-stranded RNA substrates and may not have nick-sealing activity on double-stranded DNA-RNA hybrids. May play a role in maintaining RNA integrity under stress conditions, for example in response to reactive oxygen species (ROS). The sequence is that of RNA ligase 1 from Danio rerio (Zebrafish).